The chain runs to 184 residues: Small ribosomal subunit protein bS16 (184 aa).

The span at 150 to 160 (KKAAEAAEKAA) shows a compositional bias: basic and acidic residues. Positions 150–184 (KKAAEAAEKAAAEAPAEEATEAPAEEAAATEAAAE) are disordered. Residues 164 to 173 (PAEEATEAPA) show a composition bias toward acidic residues. A compositionally biased stretch (low complexity) spans 174–184 (EEAAATEAAAE).

The protein belongs to the bacterial ribosomal protein bS16 family.

The chain is Small ribosomal subunit protein bS16 from Bacteroides thetaiotaomicron (strain ATCC 29148 / DSM 2079 / JCM 5827 / CCUG 10774 / NCTC 10582 / VPI-5482 / E50).